Reading from the N-terminus, the 491-residue chain is MADDFKVVIVGGSVAGLSLAHCLERLGVSYVVLEKGSQIAPQLGASIGILPNGGRILDQLGIFRDVEDEIEPLNFAVIRYADGFSFRSQYPKALHSSYGYPVSFLERQKFIQILYDKLRGKNHVHTRKRVVSIVDGPGKALIRTDDGDEYDADMVVGADGVHSVVRSEIWRHAKEAAGTAVTEEEPNADIKYDYACVYGISVNVPHADTGVQLSSLSDGVSIHLFAGKGSKFFWFIMVRTSRDEFLELKKDSAHMARRTCEGLGSKRLSDAVYFRDVWSRCTVYQMTPLEEGVFRQWNRGRLVCIGDAIRKMAPNIGQGANMAIEDAAQLSNLIREMLASPRKASATTVEKMLRDFAAMQKARTKSMCGQSEFLVRMHANEGFGRRLLGRYLIPSLQDAPAGLAGLSIRGAVKLECAGVPSRTLGKAWEGSWGSSLRNLMYLRPRLGILSLVYVVAGLAMMYMSIYLVVPARLAAQAFDVSRDGTEGKGGG.

FAD is bound by residues Glu-34, Gly-48, Arg-107, Asp-307, and Ala-320. Residues 448–468 (ILSLVYVVAGLAMMYMSIYLV) traverse the membrane as a helical segment.

Belongs to the paxM FAD-dependent monooxygenase family. Requires FAD as cofactor.

Its subcellular location is the membrane. It participates in secondary metabolite biosynthesis. Functionally, FAD-dependent monooxygenase; part of the gene cluster that mediates the biosynthesis of paspalitrems, indole-diterpene (IDT) mycotoxins that are potent tremorgens in mammals. The geranylgeranyl diphosphate (GGPP) synthase idtG is proposed to catalyze the first step in IDT biosynthesis via catalysis of a series of iterative condensations of isopentenyl diphosphate (IPP) with dimethylallyl diphosphate (DMAPP), geranyl diphosphate (GPP), and farnesyl diphosphate (FPP), to form GGPP. Condensation of indole-3-glycerol phosphate with GGPP by the prenyltransferase idtC then forms 3-geranylgeranylindole (3-GGI). Epoxidation of the two terminal alkenes of the geranylgeranyl moiety by the FAD-dependent monooxygenase idtM, and cyclization by the terpene cyclase idtB then leads to the production of paspaline. The cytochrome P450 monooxygenase idtP then catalyzes oxidative elimination of the pendant methyl group at C-12 of paspaline and generates the C-10 ketone to yield 13-desoxypaxilline. The cytochrome P450 monooxygenase idtQ may catalyze the C-13 oxidation of 13-desoxypaxilline to afford paxilline. Considering that both paspalicine and paxilline were detected in C.paspali, idtQ also catalyzes the formation of paspalinine from 13-desoxypaxilline via paspalicine as an intermediate. Finally, the alpha-prenyltransferase idtF prenylates paspalinine at the C-20 or the C-21 positions to yield paspalitrems A and C, respectively. The hydroxylation of paspalitrem A at C-32 by a still unknown oxidase affords paspalitrem B. This Claviceps paspali (Rye ergot fungus) protein is FAD-dependent monooxygenase idtM.